We begin with the raw amino-acid sequence, 135 residues long: ATP synthase epsilon chain (135 aa).

This sequence belongs to the ATPase epsilon chain family. F-type ATPases have 2 components, CF(1) - the catalytic core - and CF(0) - the membrane proton channel. CF(1) has five subunits: alpha(3), beta(3), gamma(1), delta(1), epsilon(1). CF(0) has three main subunits: a, b and c.

The protein resides in the cellular thylakoid membrane. Its function is as follows. Produces ATP from ADP in the presence of a proton gradient across the membrane. This is ATP synthase epsilon chain from Prochlorococcus marinus (strain MIT 9211).